Consider the following 1322-residue polypeptide: Phosphoribosylformylglycinamidine synthase (1322 aa).

Position 300-311 (300-311) interacts with ATP; sequence GASTGAGGEIRD. Over residues 593–608 the composition is skewed to polar residues; sequence QQTPQRANHTETSPTP. Positions 593–613 are disordered; the sequence is QQTPQRANHTETSPTPNTLPP. A702 contributes to the ATP binding site. Mg(2+)-binding residues include D703, E742, N746, and D915. S917 contacts ATP. A Glutamine amidotransferase type-1 domain is found at 1073–1322; it reads VAILREQGIN…LFRNARAWVG (250 aa). C1166 serves as the catalytic Nucleophile. Residues H1287 and E1289 contribute to the active site.

The protein in the N-terminal section; belongs to the FGAMS family. Monomer.

The protein localises to the cytoplasm. The enzyme catalyses N(2)-formyl-N(1)-(5-phospho-beta-D-ribosyl)glycinamide + L-glutamine + ATP + H2O = 2-formamido-N(1)-(5-O-phospho-beta-D-ribosyl)acetamidine + L-glutamate + ADP + phosphate + H(+). It functions in the pathway purine metabolism; IMP biosynthesis via de novo pathway; 5-amino-1-(5-phospho-D-ribosyl)imidazole from N(2)-formyl-N(1)-(5-phospho-D-ribosyl)glycinamide: step 1/2. Phosphoribosylformylglycinamidine synthase involved in the purines biosynthetic pathway. Catalyzes the ATP-dependent conversion of formylglycinamide ribonucleotide (FGAR) and glutamine to yield formylglycinamidine ribonucleotide (FGAM) and glutamate. The sequence is that of Phosphoribosylformylglycinamidine synthase from Xylella fastidiosa (strain 9a5c).